The primary structure comprises 187 residues: MHSYVVVTGRPGVGKTTLFWKVVRKLMDEGVVVKGFYCPEVRGQQGYRIGFKIVLLDGSGEAWLARREGCNGPRVGRYYTCPEAETIASRVLGELGKADLIAIDEIGPMELRLAGVRRTIYRVLDSGKPGLFVVHERLSDPYILARLKPSGVWFHVTIENRDVLPEKVYEAVKQAVARSKGVGELSL.

Residues 9–16 (GRPGVGKT) and 100–107 (LIAIDEIG) each bind ATP.

This sequence belongs to the THEP1 NTPase family.

The enzyme catalyses a ribonucleoside 5'-triphosphate + H2O = a ribonucleoside 5'-diphosphate + phosphate + H(+). Has nucleotide phosphatase activity towards ATP, GTP, CTP, TTP and UTP. May hydrolyze nucleoside diphosphates with lower efficiency. The protein is Nucleoside-triphosphatase THEP1 of Hyperthermus butylicus (strain DSM 5456 / JCM 9403 / PLM1-5).